The following is a 70-amino-acid chain: Sec-independent protein translocase protein TatA (70 aa).

Residues 1-21 (MAIGVNQLLIILVIIVLLFGA) traverse the membrane as a helical segment.

It belongs to the TatA/E family. The Tat system comprises two distinct complexes: a TatABC complex, containing multiple copies of TatA, TatB and TatC subunits, and a separate TatA complex, containing only TatA subunits. Substrates initially bind to the TatABC complex, which probably triggers association of the separate TatA complex to form the active translocon.

Its subcellular location is the cell inner membrane. Part of the twin-arginine translocation (Tat) system that transports large folded proteins containing a characteristic twin-arginine motif in their signal peptide across membranes. TatA could form the protein-conducting channel of the Tat system. This chain is Sec-independent protein translocase protein TatA, found in Campylobacter curvus (strain 525.92).